Here is a 266-residue protein sequence, read N- to C-terminus: Phosphatidylglycerol--prolipoprotein diacylglyceryl transferase (266 aa).

Helical transmembrane passes span 21–41, 60–80, 95–115, 124–144, 176–196, 203–223, and 236–256; these read LAIR…MWLA, LLFA…VLFY, VWTG…AMLW, FFSV…MGRM, SQLY…NIFI, GAVS…IEYF, and WISM…LLML. Position 143 (Arg143) interacts with a 1,2-diacyl-sn-glycero-3-phospho-(1'-sn-glycerol).

It belongs to the Lgt family.

Its subcellular location is the cell inner membrane. The catalysed reaction is L-cysteinyl-[prolipoprotein] + a 1,2-diacyl-sn-glycero-3-phospho-(1'-sn-glycerol) = an S-1,2-diacyl-sn-glyceryl-L-cysteinyl-[prolipoprotein] + sn-glycerol 1-phosphate + H(+). It participates in protein modification; lipoprotein biosynthesis (diacylglyceryl transfer). Catalyzes the transfer of the diacylglyceryl group from phosphatidylglycerol to the sulfhydryl group of the N-terminal cysteine of a prolipoprotein, the first step in the formation of mature lipoproteins. The chain is Phosphatidylglycerol--prolipoprotein diacylglyceryl transferase from Photobacterium profundum (strain SS9).